The chain runs to 358 residues: Carbamoyl phosphate synthase small chain (358 aa).

The tract at residues 1–168 (MKRLLLLEDG…TKLAYASPGV (168 aa)) is CPSase. The L-glutamine site is built by S45, G219, and G221. One can recognise a Glutamine amidotransferase type-1 domain in the interval 171–357 (NIVLVDFGLK…INMIDDFQQK (187 aa)). C246 acts as the Nucleophile in catalysis. L-glutamine-binding residues include M247, Q250, N288, G290, and Y291. Residues H330 and D332 contribute to the active site.

It belongs to the CarA family. In terms of assembly, composed of two chains; the small (or glutamine) chain promotes the hydrolysis of glutamine to ammonia, which is used by the large (or ammonia) chain to synthesize carbamoyl phosphate. Tetramer of heterodimers (alpha,beta)4.

It catalyses the reaction hydrogencarbonate + L-glutamine + 2 ATP + H2O = carbamoyl phosphate + L-glutamate + 2 ADP + phosphate + 2 H(+). The enzyme catalyses L-glutamine + H2O = L-glutamate + NH4(+). It participates in amino-acid biosynthesis; L-arginine biosynthesis; carbamoyl phosphate from bicarbonate: step 1/1. The protein operates within pyrimidine metabolism; UMP biosynthesis via de novo pathway; (S)-dihydroorotate from bicarbonate: step 1/3. Small subunit of the glutamine-dependent carbamoyl phosphate synthetase (CPSase). CPSase catalyzes the formation of carbamoyl phosphate from the ammonia moiety of glutamine, carbonate, and phosphate donated by ATP, constituting the first step of 2 biosynthetic pathways, one leading to arginine and/or urea and the other to pyrimidine nucleotides. The small subunit (glutamine amidotransferase) binds and cleaves glutamine to supply the large subunit with the substrate ammonia. In Streptococcus agalactiae serotype III (strain NEM316), this protein is Carbamoyl phosphate synthase small chain.